The following is a 119-amino-acid chain: NADH-quinone oxidoreductase subunit A (119 aa).

3 helical membrane-spanning segments follow: residues 7–27 (YPVL…VSIG), 63–83 (LVAI…PWGV), and 88–108 (IGWP…LGFA).

It belongs to the complex I subunit 3 family. NDH-1 is composed of 14 different subunits. Subunits NuoA, H, J, K, L, M, N constitute the membrane sector of the complex.

It localises to the cell inner membrane. The catalysed reaction is a quinone + NADH + 5 H(+)(in) = a quinol + NAD(+) + 4 H(+)(out). Functionally, NDH-1 shuttles electrons from NADH, via FMN and iron-sulfur (Fe-S) centers, to quinones in the respiratory chain. The immediate electron acceptor for the enzyme in this species is believed to be ubiquinone. Couples the redox reaction to proton translocation (for every two electrons transferred, four hydrogen ions are translocated across the cytoplasmic membrane), and thus conserves the redox energy in a proton gradient. In Burkholderia vietnamiensis (strain G4 / LMG 22486) (Burkholderia cepacia (strain R1808)), this protein is NADH-quinone oxidoreductase subunit A.